Consider the following 1276-residue polypeptide: Histone-lysine N-methyltransferase PRDM16 (1276 aa).

Positions 1 to 10 are enriched in basic residues; it reads MRSKARARKL. The segment at 1-68 is disordered; that stretch reads MRSKARARKL…DFTPKEGSPY (68 aa). The SET domain occupies 82 to 211; sequence ADFELRESSI…PGEELLVHVK (130 aa). A C2H2-type 1; atypical zinc finger spans residues 230-253; that stretch reads FRCDECDELFQSKLDLRRHKKYTC. C2H2-type zinc fingers lie at residues 281-303, 309-331, 337-360, 366-388, and 394-416; these read HECK…MVIH, YKCD…QMSH, FECE…RSQH, HACP…KHIH, and FICE…KRMH. The segment at 423–445 adopts a C2H2-type 7; atypical zinc-finger fold; that stretch reads IKCKDCGQMFSTTSSLNKHRRFC. Disordered stretches follow at residues 533–657 and 772–804; these read SLLK…APPG and PFDL…QPLD. Positions 561–570 are enriched in polar residues; it reads AVSNSSQGTT. Basic and acidic residues predominate over residues 575 to 597; it reads PEEKFESRLEDSCVEKLKTRSSD. A compositionally biased stretch (low complexity) spans 609–624; that stretch reads TTTGTDLDTTTGTGSD. A compositionally biased stretch (basic and acidic residues) spans 632–642; the sequence is DPDKDKGKGKS. Positions 679–1038 are interaction with CTBP1, CTBP2 and ZNF516; sequence DEQLLTATGA…KHEHENAPVS (360 aa). A mediates interaction with SKI and regulation of TGF-beta signaling region spans residues 739 to 1276; the sequence is PFTDRALAHN…SGAFHPINHL (538 aa). 3 C2H2-type zinc fingers span residues 951 to 973, 979 to 1002, and 1008 to 1032; these read YTCR…LRTH, YRCK…RNIH, and FKCH…KHEH. Disordered stretches follow at residues 1033–1065 and 1105–1163; these read ENAP…HALL and AQCP…EPAA. Residues 1047–1058 are compositionally biased toward polar residues; it reads HLGTSASSPTSE. Residues 1116 to 1133 show a composition bias toward acidic residues; the sequence is EDVEEEDDDDLEEDDEDS.

It belongs to the PRDM16 family. As to quaternary structure, interacts with CEBPA, CEBPB and CEBPD; the interaction is direct. Interacts with PPARG and PPARA; controls brown adipocytes differentiation. Interacts with CTBP1 and CTBP2; represses the expression of WAT-specific genes. Interacts with PPARGC1A and PPARGC1B; interaction with PPARGC1A or PPARGC1B activates the transcription of BAT-specific gene. Interacts with HDAC1, SKI, SMAD2 and SMAD3; the interaction with SKI promotes the recruitment of SMAD3-HDAC1 complex on the promoter of TGF-beta target genes. Interacts with ZNF516; the interaction is direct and may play a role in the transcription of brown adipose tissue-specific gene. Expressed in uterus and kidney. Expressed in both cardiomyocytes and interstitial cells.

The protein localises to the nucleus. It localises to the cytoplasm. The catalysed reaction is L-lysyl(9)-[histone H3] + S-adenosyl-L-methionine = N(6)-methyl-L-lysyl(9)-[histone H3] + S-adenosyl-L-homocysteine + H(+). In terms of biological role, binds DNA and functions as a transcriptional regulator. Displays histone methyltransferase activity and monomethylates 'Lys-9' of histone H3 (H3K9me1) in vitro. Probably catalyzes the monomethylation of free histone H3 in the cytoplasm which is then transported to the nucleus and incorporated into nucleosomes where SUV39H methyltransferases use it as a substrate to catalyze histone H3 'Lys-9' trimethylation. Likely to be one of the primary histone methyltransferases along with MECOM/PRDM3 that direct cytoplasmic H3K9me1 methylation. Functions in the differentiation of brown adipose tissue (BAT) which is specialized in dissipating chemical energy in the form of heat in response to cold or excess feeding while white adipose tissue (WAT) is specialized in the storage of excess energy and the control of systemic metabolism. Together with CEBPB, regulates the differentiation of myoblastic precursors into brown adipose cells. Functions as a repressor of TGF-beta signaling. Its function is as follows. Binds DNA and functions as a transcriptional regulator. Functions as a repressor of TGF-beta signaling. May regulate granulocyte differentiation. The polypeptide is Histone-lysine N-methyltransferase PRDM16 (Homo sapiens (Human)).